We begin with the raw amino-acid sequence, 184 residues long: NADH-quinone oxidoreductase subunit B (184 aa).

4 residues coordinate [4Fe-4S] cluster: C37, C38, C103, and C132.

This sequence belongs to the complex I 20 kDa subunit family. As to quaternary structure, NDH-1 is composed of 14 different subunits. Subunits NuoB, C, D, E, F, and G constitute the peripheral sector of the complex. The cofactor is [4Fe-4S] cluster.

It localises to the cell membrane. It carries out the reaction a quinone + NADH + 5 H(+)(in) = a quinol + NAD(+) + 4 H(+)(out). In terms of biological role, NDH-1 shuttles electrons from NADH, via FMN and iron-sulfur (Fe-S) centers, to quinones in the respiratory chain. The immediate electron acceptor for the enzyme in this species is believed to be a menaquinone. Couples the redox reaction to proton translocation (for every two electrons transferred, four hydrogen ions are translocated across the cytoplasmic membrane), and thus conserves the redox energy in a proton gradient. This chain is NADH-quinone oxidoreductase subunit B, found in Beutenbergia cavernae (strain ATCC BAA-8 / DSM 12333 / CCUG 43141 / JCM 11478 / NBRC 16432 / NCIMB 13614 / HKI 0122).